The chain runs to 292 residues: Ribosome-inactivating protein saporin-2 (292 aa).

Positions 1-24 (MKIYVVATIAWILLQFSAWTTTDA) are cleaved as a signal peptide. The active site involves E200.

It belongs to the ribosome-inactivating protein family. Type 1 RIP subfamily.

It carries out the reaction Endohydrolysis of the N-glycosidic bond at one specific adenosine on the 28S rRNA.. In terms of biological role, ribosome-inactivating protein of type 1, inhibits protein synthesis in animal cells. Useful as immunotoxin for pharmacological applications. The sequence is that of Ribosome-inactivating protein saporin-2 (SAP2) from Saponaria officinalis (Common soapwort).